Consider the following 2602-residue polypeptide: Non-reducing polyketide synthase SAT8 (2602 aa).

The Nucleophile; for transacylase activity role is filled by Cys130. His249 serves as the catalytic Proton donor/acceptor; for transacylase activity. Positions 379 to 398 (MLENSTSPPSPAATSSNSHC) are disordered. The segment covering 382 to 396 (NSTSPPSPAATSSNS) has biased composition (low complexity). Residues 404-822 (PRDIAIVGMS…GSNAAMVVTQ (419 aa)) form the Ketosynthase family 3 (KS3) domain. Residues Cys571, His706, and His745 each act as for beta-ketoacyl synthase activity in the active site. The tract at residues 926-1216 (FGGQMSTFVG…AMARRSLDSN (291 aa)) is malonyl-CoA:ACP transacylase (MAT). Residues 1298-1442 (GPLFGLLTFV…GKLDLLSSSE (145 aa)) form an N-terminal hotdog fold region. Residues 1298–1618 (GPLFGLLTFV…YTRIPRHSMT (321 aa)) form the PKS/mFAS DH domain. The tract at residues 1331-1616 (LVIPHIIART…IAYTRIPRHS (286 aa)) is product template (PT) domain. The active-site Proton acceptor; for dehydratase activity is His1335. Positions 1467–1618 (GDVSGLQGRS…YTRIPRHSMT (152 aa)) are C-terminal hotdog fold. Asp1524 acts as the Proton donor; for dehydratase activity in catalysis. Residues 1658-1733 (DTLKQTVGQI…AFVRYISKVV (76 aa)) enclose the Carrier domain. An O-(pantetheine 4'-phosphoryl)serine modification is found at Ser1692. The tract at residues 1737 to 1772 (DDLGTPSHSDNDSHVTGTTATPNSSSASSDTHHGNS) is disordered. Residues 1752-1765 (TGTTATPNSSSASS) are compositionally biased toward low complexity. A methyltransferase domain region spans residues 1979-2150 (VEKVKDDFQG…GYGHVDWTDG (172 aa)). The NADPH-binding domain stretch occupies residues 2229-2530 (IVVVTGATGS…IPLGEWVRKV (302 aa)).

Pantetheine 4'-phosphate is required as a cofactor.

Its pathway is mycotoxin biosynthesis. In terms of biological role, non-reducing polyketide synthase; part of the satratoxin SC1 cluster involved in the biosynthesis of satratoxins, trichothecene mycotoxins that are associated with human food poisonings. Satratoxins are suggested to be made by products of multiple gene clusters (SC1, SC2 and SC3) that encode 21 proteins in all, including polyketide synthases, acetyltransferases, and other enzymes expected to modify the trichothecene skeleton. SC1 encodes 10 proteins, SAT1 to SAT10. The largest are SAT8, which encodes a putative polyketide synthase (PKS) with a conventional non-reducing architecture, and SAT10, a putative protein containing four ankyrin repeats and thus may be involved in protein scaffolding. The putative short-chain reductase SAT3 may assist the PKS in some capacity. SAT6 contains a secretory lipase domain and acts probably as a trichothecene esterase. SAT5 encodes a putative acetyltransferase, and so, with SAT6, may affect endogenous protection from toxicity. The probable transcription factor SAT9 may regulate the expression of the SC1 cluster. SC2 encodes proteins SAT11 to SAT16, the largest of which encodes the putative reducing PKS SAT13. SAT11 is a cytochrome P450 monooxygenase, while SAT14 and SAT16 are probable acetyltransferases. The SC2 cluster may be regulated by the transcription factor SAT15. SC3 is a small cluster that encodes 5 proteins, SAT17 to SAT21. SAT21 is a putative MFS-type transporter which may have a role in exporting secondary metabolites. The four other proteins putatively encoded in SC3 include the taurine hydroxylase-like protein SAT17, the O-methyltransferase SAT18, the acetyltransferase SAT19, and the Cys6-type zinc finger SAT20, the latter being probably involved in regulation of SC3 expression. The protein is Non-reducing polyketide synthase SAT8 of Stachybotrys chartarum (strain CBS 109288 / IBT 7711) (Toxic black mold).